Reading from the N-terminus, the 284-residue chain is Nucleotide-binding protein Sbal223_0704 (284 aa).

ATP is bound at residue 8–15 (GRSGSGKS). A GTP-binding site is contributed by 56-59 (DVRN).

It belongs to the RapZ-like family.

Displays ATPase and GTPase activities. The polypeptide is Nucleotide-binding protein Sbal223_0704 (Shewanella baltica (strain OS223)).